The following is a 78-amino-acid chain: Small ribosomal subunit protein bS16c (78 aa).

This sequence belongs to the bacterial ribosomal protein bS16 family.

The protein localises to the plastid. The protein resides in the chloroplast. This is Small ribosomal subunit protein bS16c from Gracilaria tenuistipitata var. liui (Red alga).